We begin with the raw amino-acid sequence, 445 residues long: Arginine biosynthesis bifunctional protein ArgJ, mitochondrial (445 aa).

Substrate contacts are provided by threonine 189, lysine 215, threonine 226, glutamate 312, asparagine 440, and serine 445. Residue threonine 226 is the Nucleophile of the active site.

The protein belongs to the ArgJ family. Heterodimer of an alpha and a beta chain. The alpha and beta chains are autoproteolytically processed from a single precursor protein within the mitochondrion.

It localises to the mitochondrion matrix. It carries out the reaction N(2)-acetyl-L-ornithine + L-glutamate = N-acetyl-L-glutamate + L-ornithine. It catalyses the reaction L-glutamate + acetyl-CoA = N-acetyl-L-glutamate + CoA + H(+). It participates in amino-acid biosynthesis; L-arginine biosynthesis; L-ornithine and N-acetyl-L-glutamate from L-glutamate and N(2)-acetyl-L-ornithine (cyclic): step 1/1. It functions in the pathway amino-acid biosynthesis; L-arginine biosynthesis; N(2)-acetyl-L-ornithine from L-glutamate: step 1/4. Functionally, catalyzes two activities which are involved in the cyclic version of arginine biosynthesis: the synthesis of acetylglutamate from glutamate and acetyl-CoA, and of ornithine by transacetylation between acetylornithine and glutamate. In Schizosaccharomyces pombe (strain 972 / ATCC 24843) (Fission yeast), this protein is Arginine biosynthesis bifunctional protein ArgJ, mitochondrial.